A 440-amino-acid polypeptide reads, in one-letter code: Na(+)/H(+) antiporter NhaA (440 aa).

The next 11 membrane-spanning stretches (helical) occupy residues 25–45 (FLHI…VALV), 76–96 (LHHV…GLEV), 112–132 (TLPI…YLSM), 141–161 (GWGI…AILG), 170–190 (VLLL…IAIG), 194–214 (SLDG…HFLS), 225–245 (VIVG…ATLI), 312–332 (HPWT…GVLI), 345–365 (VVIG…WLVI), 378–398 (WPIL…ALFI), and 414–434 (GVLV…LWTL).

This sequence belongs to the NhaA Na(+)/H(+) (TC 2.A.33) antiporter family.

The protein resides in the cell inner membrane. It catalyses the reaction Na(+)(in) + 2 H(+)(out) = Na(+)(out) + 2 H(+)(in). In terms of biological role, na(+)/H(+) antiporter that extrudes sodium in exchange for external protons. The sequence is that of Na(+)/H(+) antiporter NhaA from Rhodopirellula baltica (strain DSM 10527 / NCIMB 13988 / SH1).